A 406-amino-acid polypeptide reads, in one-letter code: MSPPSQIKPPQGTTPVPPSELDPRSDEEIVRSISAHVKPTDSEKNMWAYWHSGWENMPPWTKRNVVHWARMLGTEWTVRVLDGIPGSANYYERFVPPHLLPSAMRERRMSGPYVATHSADFVRLPLLFLYGGCWLDVGAILVRSIQDVWDVLADPKQSYEFAAFTYMMRPGEASIINTWMMGRKNMELLRRWHDTFLHLWGDKSSCDGLHKHPLLSHLRPLSSLTHGLITDENNEPVAKTDKIIDYGAQVYCLDRLRDLVDTNDGWNGRQCIEEKTFLLAALDEMWYYQPKTDYLGSRQFELLTTRYDAPEPQRGDAEEFVNDMLANTMLMKFCHGLKDAMVSSLADIWDDPKHDGTDCAPGTFAEYLRWGTLHLRQTRTLEPVKLTAPAGKLHHVAMFEPFPSTN.

The disordered stretch occupies residues 1-26 (MSPPSQIKPPQGTTPVPPSELDPRSD).

This sequence belongs to the afumC glycosyltransferase family.

The protein operates within mycotoxin biosynthesis. O-glycosyltransferase; part of the 2 gene clusters that mediate the biosynthesis of fusicoccins, diterpene glucosides that display phytohormone-like activity and function as potent activators of plasma membrane H(+)-ATPases in plants by modifying 14-3-3 proteins and cause the plant disease constriction canker. The first step in the pathway is performed by the fusicoccadiene synthase PaFS that possesses both prenyl transferase and terpene cyclase activity, converting isopentenyl diphosphate and dimethylallyl diphosphate into geranylgeranyl diphosphate (GGDP) and successively converting GGDP into fusicocca-2,10(14)-diene, a precursor for fusicoccin H. The second step is the oxidation at the C-8 position by the cytochrome P450 monooxygenase PaP450-2 to yield fusicocca-2,10(14)-diene-8-beta-ol. The cytochrome P450 monooxygenase PaP450-1 then catalyzes the hydroxylation at the C-16 position to produce fusicocca-2,10(14)-diene-8-beta,16-diol. The dioxygenase fc-dox then catalyzes the 16-oxydation of fusicocca-2,10(14)-diene-8-beta,16-diol to yield an aldehyde (8-beta-hydroxyfusicocca-1,10(14)-dien-16-al). The short-chain dehydrogenase/reductase fc-sdr catalyzes the reduction of the aldehyde to yield fusicocca-1,10(14)-diene-8-beta,16-diol. The next step is the hydroxylation at C-9 performed by the cytochrome P450 monooxygenase PaP450-3 that leads to fusicoccin H aglycon which is glycosylated to fusicoccin H by the O-glycosyltransferase PaGT. Hydroxylation at C-12 by the cytochrome P450 monooxygenase PaP450-4 leads then to the production of fusicoccin Q and is followed by methylation by the O-methyltransferase PaMT to yield fusicoccin P. Fusicoccin P is further converted to fusicoccin J via prenylation by the O-glucose prenyltransferase PaPT. Cytochrome P450 monooxygenase PaP450-5 then performs hydroxylation at C-19 to yield dideacetyl-fusicoccin A which is acetylated to 3'-O-deacetyl-fusicoccin A by the O-acetyltransferase PaAT-2. Finally, a another acetylation by the O-acetyltransferase PaAT-1 yields fusicoccin A. The polypeptide is O-glycosyltransferase PaGT (Phomopsis amygdali (Fusicoccum amygdali)).